Reading from the N-terminus, the 574-residue chain is Proline--tRNA ligase (574 aa).

It belongs to the class-II aminoacyl-tRNA synthetase family. ProS type 1 subfamily. As to quaternary structure, homodimer.

The protein resides in the cytoplasm. The enzyme catalyses tRNA(Pro) + L-proline + ATP = L-prolyl-tRNA(Pro) + AMP + diphosphate. Functionally, catalyzes the attachment of proline to tRNA(Pro) in a two-step reaction: proline is first activated by ATP to form Pro-AMP and then transferred to the acceptor end of tRNA(Pro). As ProRS can inadvertently accommodate and process non-cognate amino acids such as alanine and cysteine, to avoid such errors it has two additional distinct editing activities against alanine. One activity is designated as 'pretransfer' editing and involves the tRNA(Pro)-independent hydrolysis of activated Ala-AMP. The other activity is designated 'posttransfer' editing and involves deacylation of mischarged Ala-tRNA(Pro). The misacylated Cys-tRNA(Pro) is not edited by ProRS. This chain is Proline--tRNA ligase, found in Pseudoalteromonas translucida (strain TAC 125).